The primary structure comprises 867 residues: Replication origin-binding protein (867 aa).

A disordered region spans residues 1–39 (MNVATCTHQTHHAARAPGATSAPGAASGDPLGARRPIGD). Over residues 15–28 (RAPGATSAPGAASG) the composition is skewed to low complexity. A Helicase ATP-binding domain is found at 86–251 (ASAPTARCVT…CSLRGEKNVH (166 aa)). Residue 99–106 (APMGSGKT) coordinates ATP.

Belongs to the herpesviridae OriBP family. As to quaternary structure, homodimer. Interacts with the major DNA-binding protein ICP8. Interacts with the helicase/primase component UL8 and the polymerase accessory protein UL42.

It localises to the host nucleus. In terms of biological role, functions as a docking protein to recruit essential components of the viral replication machinery to viral DNA origins. In the presence of the major DNA-binding protein, opens dsDNA leading to a conformational change in the origin that facilitates DNA unwinding and subsequent replication. This is Replication origin-binding protein from Human herpesvirus 2 (strain HG52) (HHV-2).